Reading from the N-terminus, the 280-residue chain is Glycoprotein G (280 aa).

An N-terminal signal peptide occupies residues 1–24 (MGHSGENVLCVALLAIYLAAGGAA). Asparagine 85 and asparagine 111 each carry an N-linked (GlcNAc...) asparagine; by host glycan. The interval 191–218 (ESSEERVVATDSDSGSCEDDEKEEKSDC) is disordered.

The protein belongs to the alphaherpesvirinae glycoprotein G family.

This is Glycoprotein G (gG) from Psittacid herpesvirus 1 (isolate Amazon parrot/-/97-0001/1997) (PsHV-1).